Here is a 120-residue protein sequence, read N- to C-terminus: DNA-directed RNA polymerase II subunit rpb11 (120 aa).

The protein belongs to the archaeal Rpo11/eukaryotic RPB11/RPC19 RNA polymerase subunit family. Component of the RNA polymerase II (Pol II) complex consisting of 12 subunits.

The protein localises to the nucleus. Functionally, DNA-dependent RNA polymerase catalyzes the transcription of DNA into RNA using the four ribonucleoside triphosphates as substrates. Component of RNA polymerase II which synthesizes mRNA precursors and many functional non-coding RNAs. Pol II is the central component of the basal RNA polymerase II transcription machinery. It is composed of mobile elements that move relative to each other. RPB11 is part of the core element with the central large cleft. This is DNA-directed RNA polymerase II subunit rpb11 (polr2j) from Dictyostelium discoideum (Social amoeba).